We begin with the raw amino-acid sequence, 107 residues long: Insulin-like peptide 6 (107 aa).

The first 33 residues, 1-33 (MVLKVPTSKVLLVLATLFAVAAMISSWMPQVAA), serve as a signal peptide directing secretion. 3 disulfide bridges follow: Cys-48-Cys-91, Cys-60-Cys-105, and Cys-90-Cys-96. A propeptide spans 67 to 76 (LGDVFPNSFG) (connecting peptide).

Belongs to the insulin family. As to quaternary structure, heterodimer of a B chain and an A chain linked by two disulfide bonds. As to expression, expressed at a low level in the larval gut.

Its subcellular location is the secreted. Possible ligand of InR/insulin-like receptor. This chain is Insulin-like peptide 6, found in Drosophila melanogaster (Fruit fly).